Consider the following 78-residue polypeptide: Omega-conotoxin-like SO-4 (78 aa).

A signal peptide spans 1–22; sequence MKLTCMVIVAVLLLTACQLITA. Positions 23-42 are excised as a propeptide; that stretch reads DDSRGTQKHRSLRSTTKVSK. Disulfide bonds link C46-C62, C53-C65, and C61-C72.

Belongs to the conotoxin O1 superfamily. Expressed by the venom duct.

The protein resides in the secreted. Its function is as follows. Omega-conotoxins act at presynaptic membranes, they bind and block voltage-gated calcium channels (Cav). The polypeptide is Omega-conotoxin-like SO-4 (SO4) (Conus striatus (Striated cone)).